The sequence spans 161 residues: V-type proton ATPase subunit c (161 aa).

Residues 1–9 lie on the Lumenal side of the membrane; sequence MSTDLCPVY. The helical transmembrane segment at 10 to 32 threads the bilayer; that stretch reads APFFGVMGCTAAIVFASFGAAYG. At 33–54 the chain is on the cytoplasmic side; it reads TAKAGVGISAMGVLRPDLIVKN. Residues 55 to 75 traverse the membrane as a helical segment; the sequence is TIPVVMAGIIAIYGLVVSVLI. Residues 76 to 91 lie on the Lumenal side of the membrane; sequence SGNLKQILSLYSGFIQ. A helical transmembrane segment spans residues 92–113; it reads LGAGLSVGLAGLAAGFAIGIVG. Over 114–125 the chain is Cytoplasmic; that stretch reads DAGVRGTAQQPR. Residues 126–151 form a helical membrane-spanning segment; sequence LFVAMILILIFAEVLGLYGLIVALLL. At 152–161 the chain is on the lumenal side; that stretch reads NTRATDNVTC.

The protein belongs to the V-ATPase proteolipid subunit family. V-ATPase is a heteromultimeric enzyme composed of a peripheral catalytic V1 complex (components A to H) attached to an integral membrane V0 proton pore complex (components: a, c, c', c'', d, e, f and VOA1). The decameric c-ring forms the proton-conducting pore, and is composed of eight proteolipid subunits c, one subunit c' and one subunit c''.

The protein resides in the vacuole membrane. In terms of biological role, proton-conducting pore forming subunit of the V0 complex of vacuolar(H+)-ATPase (V-ATPase), a multisubunit enzyme composed of a peripheral complex (V1) that hydrolyzes ATP and a membrane integral complex (V0) that translocates protons. V-ATPase is responsible for acidifying and maintaining the pH of intracellular compartments. This chain is V-type proton ATPase subunit c, found in Schizosaccharomyces pombe (strain 972 / ATCC 24843) (Fission yeast).